We begin with the raw amino-acid sequence, 497 residues long: Acetyltransferase FGR3 (497 aa).

Ca(2+) contacts are provided by Asp221 and Ile224. CoA contacts are provided by Lys255 and Asp303. Residue Asp386 participates in Ca(2+) binding. Thr396 is a CoA binding site. A Ca(2+)-binding site is contributed by Asp462. Residues 477 to 497 form a disordered region; the sequence is DASEAKKANGTNGTNGVNGSS. The span at 485-497 shows a compositional bias: low complexity; it reads NGTNGTNGVNGSS.

It belongs to the trichothecene 3-O-acetyltransferase family.

The protein operates within secondary metabolite biosynthesis. Its function is as follows. Acetyltransferase; part of the gene cluster that mediates the biosynthesis of the tetraketides fugralins such as linear fugralin A and cyclic fugralin B, volatile compounds that play a role in the asexual reproductive cycle but are not involved in pathogenicity. One of the key features of fugralins is the presence of a double methyl group, which is only rarely encountered in fungal secondary metabolites. As the fugralins cluster does not contain an independent methyltransferase, the PKS FGR1 is probably responsible for adding two methyl groups to the same carbon atom. Fugralin B is similar to fugralin A except for a cyclization between the carboxylic acid C-8 and the alcohol on C-4 resulting in a six membered lactone ring, probably catalyzed by the cyclase FGR4. The exact role of the individual cluster genes remains unknown and further work is needed to unravel the biosynthetic pathway. The sequence is that of Acetyltransferase FGR3 from Gibberella zeae (strain ATCC MYA-4620 / CBS 123657 / FGSC 9075 / NRRL 31084 / PH-1) (Wheat head blight fungus).